The primary structure comprises 931 residues: Phosphoenolpyruvate carboxylase (931 aa).

Active-site residues include His-158 and Lys-593.

It belongs to the PEPCase type 1 family. Requires Mg(2+) as cofactor.

It catalyses the reaction oxaloacetate + phosphate = phosphoenolpyruvate + hydrogencarbonate. Its function is as follows. Forms oxaloacetate, a four-carbon dicarboxylic acid source for the tricarboxylic acid cycle. The chain is Phosphoenolpyruvate carboxylase from Azorhizobium caulinodans (strain ATCC 43989 / DSM 5975 / JCM 20966 / LMG 6465 / NBRC 14845 / NCIMB 13405 / ORS 571).